A 727-amino-acid polypeptide reads, in one-letter code: Ankyrin repeat domain-containing protein 6 (727 aa).

ANK repeat units follow at residues 9-38, 41-70, 74-103, 107-136, 140-169, 173-202, 206-235, and 239-268; these read ALSE…RVAV, HGRT…DLDV, GDQT…ALDR, DGNT…NVLA, AGNT…RADL, AGDT…SVHE, AGDT…DTTI, and AGQT…VLRF. Residues 277-386 form a disordered region; it reads KRERLKEERR…HRCSSPPPPH (110 aa). Over residues 280 to 296 the composition is skewed to basic and acidic residues; that stretch reads RLKEERRAQSVPRDEVA. Residues 298–312 are compositionally biased toward polar residues; it reads SKGSVSAGDTPSSEQ. The segment covering 314-324 has biased composition (basic and acidic residues); that stretch reads VARKEEAREEF. Basic residues predominate over residues 363 to 379; sequence KNLHAHNHPKKRNRHRC. Positions 417-446 form a coiled coil; it reads LINKLENQLEATVEEIKAELGSVQDKMNTK. Residues 548 to 557 are compositionally biased toward low complexity; that stretch reads PAAASDSSPP. Disordered stretches follow at residues 548–586 and 601–657; these read PAAA…CTGS and NEAA…TGPH. Positions 566–584 are enriched in polar residues; that stretch reads LNSTATQRLQQELSSSDCT. Residues 622–633 are compositionally biased toward basic residues; that stretch reads KSGKSGPTRHRA. Positions 682–727 form a coiled coil; that stretch reads WYERKIEEARSQANQKAQQDKATLKEHIKSLEEELAKLRTRVQKEN.

In terms of assembly, interacts with AXN1, AXN2 and CSNK1E/CKI-epsilon.

In terms of biological role, recruits CKI-epsilon to the beta-catenin degradation complex that consists of AXN1 or AXN2 and GSK3-beta and allows efficient phosphorylation of beta-catenin, thereby inhibiting beta-catenin/Tcf signals. The sequence is that of Ankyrin repeat domain-containing protein 6 (ANKRD6) from Homo sapiens (Human).